A 481-amino-acid polypeptide reads, in one-letter code: Cysteine--tRNA ligase (481 aa).

Cys-43 provides a ligand contact to Zn(2+). The 'HIGH' region signature appears at 45–55; the sequence is ATVQGLPHIGH. Zn(2+) contacts are provided by Cys-221, His-246, and Glu-250. The 'KMSKS' region motif lies at 277-281; the sequence is KMSKS. Lys-280 contributes to the ATP binding site.

This sequence belongs to the class-I aminoacyl-tRNA synthetase family. Monomer. Zn(2+) is required as a cofactor.

Its subcellular location is the cytoplasm. The catalysed reaction is tRNA(Cys) + L-cysteine + ATP = L-cysteinyl-tRNA(Cys) + AMP + diphosphate. This is Cysteine--tRNA ligase from Mycobacterium sp. (strain KMS).